The chain runs to 475 residues: Glycogen synthase (475 aa).

K15 lines the ADP-alpha-D-glucose pocket.

This sequence belongs to the glycosyltransferase 1 family. Bacterial/plant glycogen synthase subfamily.

The catalysed reaction is [(1-&gt;4)-alpha-D-glucosyl](n) + ADP-alpha-D-glucose = [(1-&gt;4)-alpha-D-glucosyl](n+1) + ADP + H(+). The protein operates within glycan biosynthesis; glycogen biosynthesis. Functionally, synthesizes alpha-1,4-glucan chains using ADP-glucose. This chain is Glycogen synthase, found in Chlamydia caviae (strain ATCC VR-813 / DSM 19441 / 03DC25 / GPIC) (Chlamydophila caviae).